Here is a 327-residue protein sequence, read N- to C-terminus: Ribosomal RNA large subunit methyltransferase F (327 aa).

This sequence belongs to the methyltransferase superfamily. METTL16/RlmF family.

It is found in the cytoplasm. It catalyses the reaction adenosine(1618) in 23S rRNA + S-adenosyl-L-methionine = N(6)-methyladenosine(1618) in 23S rRNA + S-adenosyl-L-homocysteine + H(+). Functionally, specifically methylates the adenine in position 1618 of 23S rRNA. The polypeptide is Ribosomal RNA large subunit methyltransferase F (Marinomonas sp. (strain MWYL1)).